Reading from the N-terminus, the 189-residue chain is Thymidylate kinase (189 aa).

7-14 (GIDTAGKS) contributes to the ATP binding site.

It belongs to the thymidylate kinase family.

The catalysed reaction is dTMP + ATP = dTDP + ADP. Phosphorylation of dTMP to form dTDP in both de novo and salvage pathways of dTTP synthesis. In Aliarcobacter butzleri (strain RM4018) (Arcobacter butzleri), this protein is Thymidylate kinase.